The sequence spans 410 residues: Protein CNPPD1 (410 aa).

Residues 233–253 (CLLAVAYVSSVALAVASVAVI) traverse the membrane as a helical segment.

The protein belongs to the CNPPD1 family.

The protein resides in the membrane. In Homo sapiens (Human), this protein is Protein CNPPD1 (CNPPD1).